Reading from the N-terminus, the 103-residue chain is Large ribosomal subunit protein eL14 (103 aa).

Belongs to the eukaryotic ribosomal protein eL14 family.

This chain is Large ribosomal subunit protein eL14, found in Pyrobaculum neutrophilum (strain DSM 2338 / JCM 9278 / NBRC 100436 / V24Sta) (Thermoproteus neutrophilus).